A 564-amino-acid polypeptide reads, in one-letter code: Dihydropyrimidinase-related protein 5 (564 aa).

Threonine 509 and threonine 514 each carry phosphothreonine. A phosphoserine mark is found at serine 532 and serine 538. At arginine 559 the chain carries Omega-N-methylarginine.

Belongs to the metallo-dependent hydrolases superfamily. Hydantoinase/dihydropyrimidinase family. In terms of assembly, homotetramer, and heterotetramer with other DPYS-like proteins. Interacts with DPYSL2, DPYSL3 and DPYSL4. Interacts with MAP2 and TUBB3.

The protein resides in the cytoplasm. Involved in the negative regulation of dendrite outgrowth. In Homo sapiens (Human), this protein is Dihydropyrimidinase-related protein 5 (DPYSL5).